An 81-amino-acid polypeptide reads, in one-letter code: Control protein C.BamHI (81 aa).

Residues 13–68 (VRQIRLSKSNMSQEKLAFECDLHRTYISDIERGTRNVSLDNIEKISKALGVQPKDL) form the HTH cro/C1-type domain. Positions 25–44 (QEKLAFECDLHRTYISDIER) form a DNA-binding region, H-T-H motif.

Functionally, may help modulate methylase (M) and restriction enzyme (R) expression as cells undergo physiological changes such as sporulation or transformation. The protein is Control protein C.BamHI of Bacillus amyloliquefaciens (Bacillus velezensis).